A 459-amino-acid polypeptide reads, in one-letter code: MAP kinase-interacting serine/threonine-protein kinase 2 (459 aa).

Residues 28-67 form a disordered region; the sequence is LDPAQHGDSDFSPQCEARPDMPSSQPIDIPDAKKRGRKKK. The short motif at 60 to 66 is the Nuclear localization signal element; it reads KKRGRKK. Ser-74 is subject to Phosphoserine. Positions 84–368 constitute a Protein kinase domain; that stretch reads QLQEDVLGEG…AAQVLQHPWV (285 aa). ATP is bound by residues 90–98 and Lys-113; that span reads LGEGAHARV. Residue 160–162 participates in staurosporine binding; it reads EKM. Asp-205 functions as the Proton acceptor in the catalytic mechanism. Glu-209 provides a ligand contact to staurosporine. Phosphothreonine occurs at positions 244 and 249. Zn(2+)-binding residues include Cys-299, Cys-311, and Cys-314. Thr-379 is subject to Phosphothreonine. Residues Ser-431 and Ser-434 each carry the phosphoserine modification. Residues 438–442 carry the MAP kinase binding motif; sequence LAQRR. Ser-446 is modified (phosphoserine). At Thr-450 the chain carries Phosphothreonine.

This sequence belongs to the protein kinase superfamily. CAMK Ser/Thr protein kinase family. As to quaternary structure, monomer. Interacts with the C-terminal regions of EIF4G1 and EIF4G2; this interaction is promoted when MAPK pathways are repressed but repressed upon ERK proteins activation. Also binds to dephosphorylated MAPK3/ERK1 and MAPK1/ER2K. Interaction with phosphorylated MAPK3/ERK1 and MAPK1/ER2K protects it from dephosphorylation and inactivation. Interacts with ESR2 and EIF4E in the nucleus. Mg(2+) is required as a cofactor. Zn(2+) serves as cofactor. In terms of processing, dual phosphorylation of Thr-244 and Thr-249 activates the kinase. Phosphorylation of Thr-379 activates the kinase. Phosphorylated upon arsenic trioxide As(2)O(3) treatment. Phosphorylated by MAPK1/ERK2, MAPK11 and MAPK14. Dephosphorylated by PP2A.

Its subcellular location is the cytoplasm. It is found in the nucleus. It localises to the PML body. It carries out the reaction L-seryl-[protein] + ATP = O-phospho-L-seryl-[protein] + ADP + H(+). The catalysed reaction is L-threonyl-[protein] + ATP = O-phospho-L-threonyl-[protein] + ADP + H(+). Inhibited by CGP57380 and staurosporine. Functionally, serine/threonine-protein kinase that phosphorylates SFPQ/PSF, HNRNPA1 and EIF4E. May play a role in the response to environmental stress and cytokines. Appears to regulate translation by phosphorylating EIF4E, thus increasing the affinity of this protein for the 7-methylguanosine-containing mRNA cap. Required for mediating PP2A-inhibition-induced EIF4E phosphorylation. Triggers EIF4E shuttling from cytoplasm to nucleus. Enhances the formation of EIF4F complex in pachytene spermatocytes, thus promoting mRNA translation during spermatogenesis. Displays a high basal kinase activity. Acts as a mediator of the suppressive effects of IFNgamma on hematopoiesis. Negative regulator for signals that control generation of arsenic trioxide As(2)O(3)-dependent apoptosis and anti-leukemic responses. Involved in anti-apoptotic signaling in response to serum withdrawal. In Rattus norvegicus (Rat), this protein is MAP kinase-interacting serine/threonine-protein kinase 2 (Mknk2).